A 376-amino-acid polypeptide reads, in one-letter code: Ribosomal RNA large subunit methyltransferase G (376 aa).

It belongs to the methyltransferase superfamily. RlmG family.

It localises to the cytoplasm. The enzyme catalyses guanosine(1835) in 23S rRNA + S-adenosyl-L-methionine = N(2)-methylguanosine(1835) in 23S rRNA + S-adenosyl-L-homocysteine + H(+). Its function is as follows. Specifically methylates the guanine in position 1835 (m2G1835) of 23S rRNA. The sequence is that of Ribosomal RNA large subunit methyltransferase G from Klebsiella pneumoniae (strain 342).